Reading from the N-terminus, the 352-residue chain is Uroporphyrinogen decarboxylase (352 aa).

Substrate is bound by residues 29–33, F48, D78, Y154, S209, and H322; that span reads RQAGR.

The protein belongs to the uroporphyrinogen decarboxylase family. In terms of assembly, homodimer.

The protein resides in the cytoplasm. It carries out the reaction uroporphyrinogen III + 4 H(+) = coproporphyrinogen III + 4 CO2. Its pathway is porphyrin-containing compound metabolism; protoporphyrin-IX biosynthesis; coproporphyrinogen-III from 5-aminolevulinate: step 4/4. Catalyzes the decarboxylation of four acetate groups of uroporphyrinogen-III to yield coproporphyrinogen-III. This is Uroporphyrinogen decarboxylase from Bacillus pumilus (strain SAFR-032).